The chain runs to 478 residues: Calcium/calmodulin-dependent protein kinase type II subunit alpha (478 aa).

Y13 carries the phosphotyrosine modification. The region spanning 13-271 (YQLFEELGKG…AAEALKHPWI (259 aa)) is the Protein kinase domain. Residues 19 to 27 (LGKGAFSVV) and K42 contribute to the ATP site. The active-site Proton acceptor is D135. At S257 the chain carries Phosphoserine. A Phosphothreonine; by autocatalysis modification is found at T286. A calmodulin-binding region spans residues 290–300 (LKKFNARRKLK). Residues 310 to 320 (TRNFSGGKSGG) are interaction with BAALC. The disordered stretch occupies residues 314 to 341 (SGGKSGGNKKNDGVKESSESTNTTIEDE). Positions 322 to 331 (KKNDGVKESS) are enriched in basic and acidic residues. Phosphoserine is present on residues S330, S331, and S333. A phosphothreonine mark is found at T336 and T337. S404 is subject to Phosphoserine.

Belongs to the protein kinase superfamily. CAMK Ser/Thr protein kinase family. CaMK subfamily. As to quaternary structure, there are 4 genes encoding calcium/calmodulin-dependent protein kinase type II chains: CAMK2A, CAMK2B, CAMK2G and CAMK2D. The corresponding proteins assemble into homo- or heteromultimeric holoenzymes composed of 12 subunits with two hexameric rings stacked one on top of the other. Interacts with BAALC. Interacts with MPDZ. Interacts with SYN1. Interacts with CAMK2N2. Interacts with SYNGAP1. Interacts with SYNPO2. Interacts with SHANK3. Interacts with GRIN2B. Interacts with CACNB2. Interacts with LRRC7. Interacts with GRM5. Interacts with DAGLA (via C-terminal); this interaction is enhanced by autophosphorylation of CAMK2A at Thr-286. Interacts with CAMK2N1; this interaction requires CAMK2A activation by Ca(2+). Requires Mg(2+) as cofactor. Autophosphorylation of Thr-286 following activation by Ca(2+)/calmodulin. Phosphorylation of Thr-286 locks the kinase into an activated state. In terms of processing, palmitoylated. Probably palmitoylated by ZDHHC3 and ZDHHC7. As to expression, expressed in brain. In terms of tissue distribution, expressed in skeletal muscle.

It localises to the cytoplasm. Its subcellular location is the synapse. It is found in the postsynaptic density. The protein resides in the cell projection. The protein localises to the dendritic spine. It localises to the dendrite. The enzyme catalyses L-seryl-[protein] + ATP = O-phospho-L-seryl-[protein] + ADP + H(+). It catalyses the reaction L-threonyl-[protein] + ATP = O-phospho-L-threonyl-[protein] + ADP + H(+). Its activity is regulated as follows. Activated by Ca(2+)/calmodulin. Binding of calmodulin results in conformational change that relieves intrasteric autoinhibition and allows autophosphorylation of Thr-286 which turns the kinase in a constitutively active form and confers to the kinase a Ca(2+)-independent activity. Calcium/calmodulin-dependent protein kinase that functions autonomously after Ca(2+)/calmodulin-binding and autophosphorylation, and is involved in various processes, such as synaptic plasticity, neurotransmitter release and long-term potentiation. Member of the NMDAR signaling complex in excitatory synapses, it regulates NMDAR-dependent potentiation of the AMPAR and therefore excitatory synaptic transmission. Regulates dendritic spine development. Also regulates the migration of developing neurons. Phosphorylates the transcription factor FOXO3 to activate its transcriptional activity. Phosphorylates the transcription factor ETS1 in response to calcium signaling, thereby decreasing ETS1 affinity for DNA. In response to interferon-gamma (IFN-gamma) stimulation, catalyzes phosphorylation of STAT1, stimulating the JAK-STAT signaling pathway. In response to interferon-beta (IFN-beta) stimulation, stimulates the JAK-STAT signaling pathway. Acts as a negative regulator of 2-arachidonoylglycerol (2-AG)-mediated synaptic signaling via modulation of DAGLA activity. Functionally, has no kinase activity. This chain is Calcium/calmodulin-dependent protein kinase type II subunit alpha (Camk2a), found in Mus musculus (Mouse).